The primary structure comprises 145 residues: Mini-ribonuclease 3 (145 aa).

Aspartate 27 is an active-site residue.

Belongs to the MrnC RNase family. As to quaternary structure, homodimer. The cofactor is Mg(2+).

The protein localises to the cytoplasm. In terms of biological role, involved in correct processing of both the 5' and 3' ends of 23S rRNA precursor. Processes 30S rRNA precursor transcript even in absence of ribonuclease 3 (Rnc); Rnc processes 30S rRNA into smaller rRNA precursors. The sequence is that of Mini-ribonuclease 3 from Kosmotoga olearia (strain ATCC BAA-1733 / DSM 21960 / TBF 19.5.1).